The following is a 187-amino-acid chain: Lipid A acyltransferase PagP (187 aa).

The signal sequence occupies residues 1 to 26 (MIVAKKYFLVLSFLFVQFALLPQAFS). Catalysis depends on residues His-59, Asp-102, and Ser-103.

This sequence belongs to the lipid A palmitoyltransferase family. As to quaternary structure, homodimer.

The protein localises to the cell outer membrane. It carries out the reaction a lipid A + a 1,2-diacyl-sn-glycero-3-phosphocholine = a hepta-acyl lipid A + a 2-acyl-sn-glycero-3-phosphocholine. The enzyme catalyses a lipid IVA + a 1,2-diacyl-sn-glycero-3-phosphocholine = a lipid IVB + a 2-acyl-sn-glycero-3-phosphocholine. The catalysed reaction is a lipid IIA + a 1,2-diacyl-sn-glycero-3-phosphocholine = a lipid IIB + a 2-acyl-sn-glycero-3-phosphocholine. Functionally, transfers a fatty acid residue from the sn-1 position of a phospholipid to the N-linked hydroxyfatty acid chain on the proximal unit of lipid A or its precursors. This Citrobacter koseri (strain ATCC BAA-895 / CDC 4225-83 / SGSC4696) protein is Lipid A acyltransferase PagP.